Consider the following 331-residue polypeptide: Ribosomal RNA small subunit methyltransferase H (331 aa).

S-adenosyl-L-methionine is bound by residues 48–50 (GGH), D67, D115, and Q122. The segment at 297–331 (RGTEKPTEEEISENRRASSAKVRAVEKIRTSRTTA) is disordered. Residues 298–312 (GTEKPTEEEISENRR) are compositionally biased toward basic and acidic residues.

It belongs to the methyltransferase superfamily. RsmH family.

Its subcellular location is the cytoplasm. It catalyses the reaction cytidine(1402) in 16S rRNA + S-adenosyl-L-methionine = N(4)-methylcytidine(1402) in 16S rRNA + S-adenosyl-L-homocysteine + H(+). Its function is as follows. Specifically methylates the N4 position of cytidine in position 1402 (C1402) of 16S rRNA. This is Ribosomal RNA small subunit methyltransferase H from Micrococcus luteus (strain ATCC 4698 / DSM 20030 / JCM 1464 / CCM 169 / CCUG 5858 / IAM 1056 / NBRC 3333 / NCIMB 9278 / NCTC 2665 / VKM Ac-2230) (Micrococcus lysodeikticus).